A 2181-amino-acid polypeptide reads, in one-letter code: Non-reducing polyketide synthase subA (2181 aa).

Residues 74–180 form an N-terminal acylcarrier protein transacylase domain (SAT) region; it reads QWVKGNSTQP…LALCCGAYID (107 aa). The 433-residue stretch at 347–779 folds into the Ketosynthase family 3 (KS3) domain; it reads QAQLLVLGPV…GTNAAMLVCQ (433 aa). Catalysis depends on for beta-ketoacyl synthase activity residues Cys525, His661, and His702. The interval 891-1193 is malonyl-CoA:ACP transacylase (MAT) domain; the sequence is VLAGQTGRRV…SFYPAALGEP (303 aa). The active-site For acyl/malonyl transferase activity is Ser977. Positions 1269-1401 are N-terminal hotdog fold; it reads VSLIGKTQNA…GVITLQEVYS (133 aa). The 311-residue stretch at 1269 to 1579 folds into the PKS/mFAS DH domain; it reads VSLIGKTQNA…FQKIAISSLK (311 aa). The product template (PT) domain stretch occupies residues 1276–1573; that stretch reads QNAGVQTVEY…TILGAKFQKI (298 aa). The interval 1425-1579 is C-terminal hotdog fold; that stretch reads SASVVQGDFI…FQKIAISSLK (155 aa). Residues 1652 to 1673 are disordered; that stretch reads ISGSSRSTSSSPPSLESRSQAM. Residues 1653–1670 are compositionally biased toward low complexity; sequence SGSSRSTSSSPPSLESRS. The region spanning 1677–1753 is the Carrier domain; sequence EITEGAGSAL…TLFHTIFPQQ (77 aa). O-(pantetheine 4'-phosphoryl)serine is present on Ser1713. The interval 1982–2164 is methyltransferase (CMeT) domain; that stretch reads EFMNCLFSYN…QSGFGHVDWT (183 aa).

It functions in the pathway secondary metabolite biosynthesis; terpenoid biosynthesis. In terms of biological role, non-reducing polyketide synthase; part of the gene cluster that mediates the biosynthesis of the immunosuppressants subglutinols, meroterpenoids consisting of an alpha-pyrone (4-hydroxy-5,6-dimethyl-2-pyrone) moiety attached to a decalin core fused to a five-membered cyclic ether carrying a prenylside chain. The first step of the pathway is the synthesis of the alpha-pyrone moiety by the polyketide synthase subA via condensation of one acetyl-CoA starter unit with 3 malonyl-CoA units and 2 methylations. The alpha-pyrone is then combined with geranylgeranyl pyrophosphate (GGPP) formed by the GGPP synthase subD through the action of the prenyltransferase subC to yield a linear alpha-pyrone diterpenoid. Subsequent steps in the subglutinol biosynthetic pathway involve the decalin core formation, which is thought to be initiated by the epoxidation of the C10-C11 olefin by the FAD-dependent oxidoreductase subE. The following cyclization cascade would be catalyzed by the terpene cyclase subB. Lastly, the FAD-dependent dehydrogenase subF probably catalyzes the five-membered cyclic ether formation to complete the formation of subglutinol A. Subsequent redox reactions appear to give rise to subglutinol C and D, however, it remains unclear which enzymes are responsible for these transformations. SubD may have secondary function in the conversion of the identified subglutinols to subglutinol analog 45, which seems to be the major product of the cluster. This is Non-reducing polyketide synthase subA from Metarhizium robertsii (strain ARSEF 23 / ATCC MYA-3075) (Metarhizium anisopliae (strain ARSEF 23)).